A 115-amino-acid chain; its full sequence is uncharacterized protein (115 aa).

Helical transmembrane passes span Met-1–Trp-21, Ala-33–Gly-53, and Gly-54–Ala-74.

The protein to M.leprae ML0030.

It localises to the cell membrane. This is an uncharacterized protein from Mycobacterium tuberculosis (strain CDC 1551 / Oshkosh).